The following is a 232-amino-acid chain: ATP phosphoribosyltransferase (232 aa).

Belongs to the ATP phosphoribosyltransferase family. Short subfamily. As to quaternary structure, heteromultimer composed of HisG and HisZ subunits.

It is found in the cytoplasm. It catalyses the reaction 1-(5-phospho-beta-D-ribosyl)-ATP + diphosphate = 5-phospho-alpha-D-ribose 1-diphosphate + ATP. It functions in the pathway amino-acid biosynthesis; L-histidine biosynthesis; L-histidine from 5-phospho-alpha-D-ribose 1-diphosphate: step 1/9. Catalyzes the condensation of ATP and 5-phosphoribose 1-diphosphate to form N'-(5'-phosphoribosyl)-ATP (PR-ATP). Has a crucial role in the pathway because the rate of histidine biosynthesis seems to be controlled primarily by regulation of HisG enzymatic activity. The protein is ATP phosphoribosyltransferase (hisG) of Mesorhizobium japonicum (strain LMG 29417 / CECT 9101 / MAFF 303099) (Mesorhizobium loti (strain MAFF 303099)).